The chain runs to 556 residues: MEHSSPLAAMQPPSVMLGHCFRSDAPTSYHGFSPLPGLGPGGFNFKDLSMKRSNGDYFGTKVVRGSSPTASLAADLSQNFHIDQSPQVATPRRSLFSACLLGNGNRRGVDDAMTTPPLPSSSPAPAMDIMDMSPLPHKPPFISTPEIELDSPTLESSPMDTTMMSTDGLVPDSPTVLPKDGKQERRRPTFLRPSLARSKAQSFQVGMTRPAPESQGPPFKFQTNGINKTSSGVAASLEDMFGESPQRERPMMRINSTSGLNSRLRPPLGSGSHVRGNGSPSAASVRKSAHPNMRPRKQCRRSLSMYEHPEDVIADSEVSYTSNAPLQSISDFEETQALQLPHFIPEEQADNLPRIDKATLVDIKEGKYDNMFDNIMIIDCRFEYEYDGGHIVGAVNYNDKENLAAELFADPKPRTAIVFHCEYSVHRAPLMAKYIRHRDRAYNVDHYPQLSYPDMYILEGGYSGFFAEHRSLCYPQNYVEMSAKEHEFACERGLGKVKQRSKLSRAQTFAFGQQSPEMEDSPTGRCRNNPGDRKLLASPFNDSPGSRFPGRRMLSY.

Disordered stretches follow at residues 165–186 and 257–297; these read STDGLVPDSPTVLPKDGKQERR and TSGL…RPRK. Over residues 287 to 297 the composition is skewed to basic residues; it reads KSAHPNMRPRK. Positions 371-474 constitute a Rhodanese domain; that stretch reads MFDNIMIIDC…FFAEHRSLCY (104 aa). Cysteine 421 is a catalytic residue. Positions 505–516 are enriched in polar residues; sequence RAQTFAFGQQSP. The segment at 505-556 is disordered; it reads RAQTFAFGQQSPEMEDSPTGRCRNNPGDRKLLASPFNDSPGSRFPGRRMLSY.

It belongs to the MPI phosphatase family.

The catalysed reaction is O-phospho-L-tyrosyl-[protein] + H2O = L-tyrosyl-[protein] + phosphate. This protein functions as a dosage-dependent inducer in mitotic control. It is a tyrosine protein phosphatase required for progression of the cell cycle. It may directly dephosphorylate p34(cdc2) and activate the p34(cdc2) kinase activity. In Emericella nidulans (strain FGSC A4 / ATCC 38163 / CBS 112.46 / NRRL 194 / M139) (Aspergillus nidulans), this protein is M-phase inducer phosphatase (nimT).